Here is a 269-residue protein sequence, read N- to C-terminus: MFSDKMILIAGPCVIEEEETTLEIAAKIQEIVAPYADHIHWIFKSSYDKANRSSIHSYRGPGLKEGLRILSKVKQTFGVEILTDVHSPEEARAAAEVCDILQIPAFLCRQTDLLVAAAETQAVINIKKGQFLSPWDMQGPVDKVLSTGNSKIILTERGCSFGYNNLVSDMRAIAVLSKMGFPVVFDGTHSVQLPGGLKTHSGGQTEFIPTLTRAALAAGAHGLFIETHTNPAIAKSDAASMLSLKAFEVLLPVWNQLYQCVRSFEMASV.

This sequence belongs to the KdsA family.

The protein localises to the cytoplasm. The enzyme catalyses D-arabinose 5-phosphate + phosphoenolpyruvate + H2O = 3-deoxy-alpha-D-manno-2-octulosonate-8-phosphate + phosphate. It functions in the pathway carbohydrate biosynthesis; 3-deoxy-D-manno-octulosonate biosynthesis; 3-deoxy-D-manno-octulosonate from D-ribulose 5-phosphate: step 2/3. It participates in bacterial outer membrane biogenesis; lipopolysaccharide biosynthesis. This Chlamydia abortus (strain DSM 27085 / S26/3) (Chlamydophila abortus) protein is 2-dehydro-3-deoxyphosphooctonate aldolase.